Consider the following 252-residue polypeptide: Adenosylcobinamide-GDP ribazoletransferase (252 aa).

7 consecutive transmembrane segments (helical) span residues 4 to 24 (LLLLNLLASIIFYTSIPLPYI), 35 to 55 (LVPMVGLIIGVILGLLDGGMN), 65 to 85 (SALVVALWIFITGGLHLDGAM), 102 to 122 (VMADSATGAFGAMSAIAILLL), 178 to 198 (LLPGLCLMVAVSSLFWLVNNH), 201 to 221 (LITVVGLITGSAIASLTAAWF), and 232 to 252 (TYGAVVEWTEALFLCVLTILT).

It belongs to the CobS family. Requires Mg(2+) as cofactor.

The protein resides in the cell inner membrane. The catalysed reaction is alpha-ribazole + adenosylcob(III)inamide-GDP = adenosylcob(III)alamin + GMP + H(+). The enzyme catalyses alpha-ribazole 5'-phosphate + adenosylcob(III)inamide-GDP = adenosylcob(III)alamin 5'-phosphate + GMP + H(+). The protein operates within cofactor biosynthesis; adenosylcobalamin biosynthesis; adenosylcobalamin from cob(II)yrinate a,c-diamide: step 7/7. In terms of biological role, joins adenosylcobinamide-GDP and alpha-ribazole to generate adenosylcobalamin (Ado-cobalamin). Also synthesizes adenosylcobalamin 5'-phosphate from adenosylcobinamide-GDP and alpha-ribazole 5'-phosphate. The polypeptide is Adenosylcobinamide-GDP ribazoletransferase (Trichormus variabilis (strain ATCC 29413 / PCC 7937) (Anabaena variabilis)).